We begin with the raw amino-acid sequence, 147 residues long: Large ribosomal subunit protein uL15 (147 aa).

Basic residues predominate over residues 1–28 (MIRRRKKVRKLRGSHTHGWGCKKKHRGG). Residues 1-43 (MIRRRKKVRKLRGSHTHGWGCKKKHRGGGSKGGRGMAGTGKRN) form a disordered region. The segment covering 29–38 (GSKGGRGMAG) has biased composition (gly residues).

This sequence belongs to the universal ribosomal protein uL15 family. As to quaternary structure, part of the 50S ribosomal subunit.

Its function is as follows. Binds to the 23S rRNA. The protein is Large ribosomal subunit protein uL15 of Pyrococcus abyssi (strain GE5 / Orsay).